A 473-amino-acid polypeptide reads, in one-letter code: Glutamate--tRNA ligase (473 aa).

Residues 11–21 carry the 'HIGH' region motif; it reads PSPTGFLHIGG. The 'KMSKS' region motif lies at 240 to 244; that stretch reads KLSKR. K243 contacts ATP.

The protein belongs to the class-I aminoacyl-tRNA synthetase family. Glutamate--tRNA ligase type 1 subfamily. Monomer.

Its subcellular location is the cytoplasm. It carries out the reaction tRNA(Glu) + L-glutamate + ATP = L-glutamyl-tRNA(Glu) + AMP + diphosphate. In terms of biological role, catalyzes the attachment of glutamate to tRNA(Glu) in a two-step reaction: glutamate is first activated by ATP to form Glu-AMP and then transferred to the acceptor end of tRNA(Glu). The sequence is that of Glutamate--tRNA ligase from Rhodopseudomonas palustris (strain BisB5).